Reading from the N-terminus, the 300-residue chain is Type II methyltransferase M.XycI (300 aa).

Residues 109-129 (RGYRAPDKKNPARAMDVRPDT) form a disordered region. Basic and acidic residues predominate over residues 112–127 (RAPDKKNPARAMDVRP).

It belongs to the N(4)/N(6)-methyltransferase family. N(4) subfamily.

It catalyses the reaction a 2'-deoxycytidine in DNA + S-adenosyl-L-methionine = an N(4)-methyl-2'-deoxycytidine in DNA + S-adenosyl-L-homocysteine + H(+). Its function is as follows. A beta subtype methylase, recognizes the double-stranded sequence 5'-CCCGGG-3', methylates C-2 on both strands, and protects the DNA from cleavage by the XcyI endonuclease. The protein is Type II methyltransferase M.XycI (xcyIM) of Xanthomonas campestris pv. cyanopsidis.